Consider the following 316-residue polypeptide: Bifunctional peptidase and (3S)-lysyl hydroxylase Jmjd7 (316 aa).

Positions 128 to 307 (VQKQCSNLPT…LKYSYFQLMD (180 aa)) constitute a JmjC domain. Residues His178, Asp180, and His277 each contribute to the Fe cation site.

Homodimer; disulfide-linked. Interacts with DRG1 and DRG2. The cofactor is Fe(2+).

It is found in the nucleus. The protein localises to the cytoplasm. It catalyses the reaction L-lysyl-[protein] + 2-oxoglutarate + O2 = (3S)-3-hydroxy-L-lysyl-[protein] + succinate + CO2. Bifunctional enzyme that acts both as an endopeptidase and 2-oxoglutarate-dependent monooxygenase. Endopeptidase that cleaves histones N-terminal tails at the carboxyl side of methylated arginine or lysine residues, to generate 'tailless nucleosomes', which may trigger transcription elongation. Preferentially recognizes and cleaves monomethylated and dimethylated arginine residues of histones H2, H3 and H4. After initial cleavage, continues to digest histones tails via its aminopeptidase activity. Additionally, may play a role in protein biosynthesis by modifying the translation machinery. Acts as a Fe(2+) and 2-oxoglutarate-dependent monooxygenase, catalyzing (S)-stereospecific hydroxylation at C-3 of 'Lys-22' of DRG1 and 'Lys-21' of DRG2 translation factors (TRAFAC), promoting their interaction with ribonucleic acids (RNA). The protein is Bifunctional peptidase and (3S)-lysyl hydroxylase Jmjd7 of Mus musculus (Mouse).